Here is a 190-residue protein sequence, read N- to C-terminus: Probable chorismate pyruvate-lyase (190 aa).

Substrate contacts are provided by R74, L112, and E173.

Belongs to the UbiC family.

Its subcellular location is the cytoplasm. It carries out the reaction chorismate = 4-hydroxybenzoate + pyruvate. It functions in the pathway cofactor biosynthesis; ubiquinone biosynthesis. Its function is as follows. Removes the pyruvyl group from chorismate, with concomitant aromatization of the ring, to provide 4-hydroxybenzoate (4HB) for the ubiquinone pathway. The sequence is that of Probable chorismate pyruvate-lyase from Bordetella bronchiseptica (strain ATCC BAA-588 / NCTC 13252 / RB50) (Alcaligenes bronchisepticus).